We begin with the raw amino-acid sequence, 356 residues long: 3-deoxy-alpha-D-manno-octulosonate 8-oxidase (356 aa).

The protein belongs to the iron-containing alcohol dehydrogenase family. The cofactor is a divalent metal cation.

The catalysed reaction is 3-deoxy-alpha-D-manno-oct-2-ulosonate + O2 = 3,8-dideoxy-8-oxo-alpha-D-manno-octulosonate + H2O2. It participates in bacterial outer membrane biogenesis; lipopolysaccharide biosynthesis. With respect to regulation, inhibited by EDTA. In terms of biological role, catalyzes the first step of the biosynthesis of Kdo8N (8-amino-3,8-dideoxy-D-manno-octulosonate) from Kdo (3-deoxy-D-manno-octulosonate). The chain is 3-deoxy-alpha-D-manno-octulosonate 8-oxidase from Shewanella oneidensis (strain ATCC 700550 / JCM 31522 / CIP 106686 / LMG 19005 / NCIMB 14063 / MR-1).